The primary structure comprises 401 residues: MNYDHILIRFGEISTKGKNRKSFIERLKQNIRLVLKDYPNLKYFSNRDRMTITLNGEDPEALFPHLKQVFGIQSFSLAIKCDSRLDDIKATALKAIKDQYKPGDTFKVATKRAYKQFELDTNQMNAEIGGHILRNTEGLTVDVRNPDIPLRIEIREEATFLTIRDEKGAGGLPVGSAGKAMLMLSGGFDSPVAGFYAMKRGLSVEAVHFFSPPYTSERAKQKVMDLAKCLSRFGGSMTLHIVPFTKTQELIQKQIPENYTMTATRRLMLQIADRIREKRNGLAIITGESLGQVASQTLESMYAINAVTSTPILRPLIAMDKTEIIEKSREIGTYETSIQPFEDCCTIFTPPSPKTRPKKEKIEHFESFVDFEPYIQEAVDNIETMTLYSEQEANDKFAELF.

Residues 60–165 enclose the THUMP domain; that stretch reads EALFPHLKQV…EEATFLTIRD (106 aa). ATP contacts are provided by residues 183–184, 208–209, R265, G287, and Q296; these read ML and HF.

It belongs to the ThiI family.

The protein resides in the cytoplasm. The catalysed reaction is [ThiI sulfur-carrier protein]-S-sulfanyl-L-cysteine + a uridine in tRNA + 2 reduced [2Fe-2S]-[ferredoxin] + ATP + H(+) = [ThiI sulfur-carrier protein]-L-cysteine + a 4-thiouridine in tRNA + 2 oxidized [2Fe-2S]-[ferredoxin] + AMP + diphosphate. The enzyme catalyses [ThiS sulfur-carrier protein]-C-terminal Gly-Gly-AMP + S-sulfanyl-L-cysteinyl-[cysteine desulfurase] + AH2 = [ThiS sulfur-carrier protein]-C-terminal-Gly-aminoethanethioate + L-cysteinyl-[cysteine desulfurase] + A + AMP + 2 H(+). The protein operates within cofactor biosynthesis; thiamine diphosphate biosynthesis. In terms of biological role, catalyzes the ATP-dependent transfer of a sulfur to tRNA to produce 4-thiouridine in position 8 of tRNAs, which functions as a near-UV photosensor. Also catalyzes the transfer of sulfur to the sulfur carrier protein ThiS, forming ThiS-thiocarboxylate. This is a step in the synthesis of thiazole, in the thiamine biosynthesis pathway. The sulfur is donated as persulfide by IscS. In Bacillus subtilis (strain 168), this protein is Probable tRNA sulfurtransferase.